The following is a 369-amino-acid chain: Uroporphyrinogen decarboxylase (369 aa).

The coproporphyrinogen I site is built by R39, A41, R43, R52, D88, Y166, S221, and H341. 3 residues coordinate coproporphyrinogen III: R39, A41, and R43. 4 residues coordinate coproporphyrinogen III: D88, Y166, S221, and H341.

Belongs to the uroporphyrinogen decarboxylase family. As to quaternary structure, homodimer.

It is found in the cytoplasm. The protein localises to the cytosol. It catalyses the reaction uroporphyrinogen III + 4 H(+) = coproporphyrinogen III + 4 CO2. The catalysed reaction is uroporphyrinogen I + 4 H(+) = coproporphyrinogen I + 4 CO2. The protein operates within porphyrin-containing compound metabolism; protoporphyrin-IX biosynthesis; coproporphyrinogen-III from 5-aminolevulinate: step 4/4. Functionally, catalyzes the sequential decarboxylation of the four acetate side chains of uroporphyrinogen to form coproporphyrinogen and participates in the fifth step in the heme biosynthetic pathway. Isomer I or isomer III of uroporphyrinogen may serve as substrate, but only coproporphyrinogen III can ultimately be converted to heme. In vitro also decarboxylates pentacarboxylate porphyrinogen I. The chain is Uroporphyrinogen decarboxylase from Danio rerio (Zebrafish).